Reading from the N-terminus, the 302-residue chain is MVRKAGLIVNDGKELAVQTAISVQKKLEKSNYEVVRVSSSGGMVGFANPDQHVRPLGYSNCVPEGFDSSMEFAIVLGGDGTVLSAARQTAPAKIPILTINTGHLGFLAEAYLSNLEEAIDKLIIGKWDIEERKSLIISVMRNEQRRWESLCLNEMALHREPLTSMCHFEISIGRHAPVDISADGVILSTPTGSTAYSLSAGGPVITPDCPVVQLTPIAPHSLASRALVFNDSEPVTVFPATPERLVMVVDGNAGCYVWPEDRVLIRKSKHSVKFIRLEDHEFFQVLRNKLGWGLPHVGKPNK.

D79 functions as the Proton acceptor in the catalytic mechanism. NAD(+)-binding positions include 79–80, 153–154, D183, 194–199, A218, and N252; these read DG, NE, and TAYSLS.

The protein belongs to the NAD kinase family. A divalent metal cation is required as a cofactor.

It localises to the cytoplasm. The catalysed reaction is NAD(+) + ATP = ADP + NADP(+) + H(+). Its function is as follows. Involved in the regulation of the intracellular balance of NAD and NADP, and is a key enzyme in the biosynthesis of NADP. Catalyzes specifically the phosphorylation on 2'-hydroxyl of the adenosine moiety of NAD to yield NADP. This chain is NAD kinase 2, found in Prochlorococcus marinus subsp. pastoris (strain CCMP1986 / NIES-2087 / MED4).